Here is a 198-residue protein sequence, read N- to C-terminus: Bcl-2-like protein 11 (198 aa).

Residues 1 to 72 (MAKQPSDVSS…PLAPPASPGP (72 aa)) form a disordered region. Serine 69 carries the post-translational modification Phosphoserine; by MAPK. Serine 77, serine 87, and serine 94 each carry phosphoserine. Positions 148-162 (IAQELRRIGDEFNAY) match the BH3 motif.

It belongs to the Bcl-2 family. As to quaternary structure, forms heterodimers with a number of antiapoptotic Bcl-2 proteins, including MCL1, BCL2, BCL2L1 isoform Bcl-X(L), BCL2A1/BFL-1, BHRF1, and BCL2L2/BCLW. Does not heterodimerize with proapoptotic proteins such as BAD, BOK or BAK. Identified in a complex containing BCL2L11, DYNLL1 and BCL2L1 isoform Bcl-X(L); BH3 integrity is required for BCL2L1-binding. Interacts with YWHAZ. When phosphorylated, interacts with TRIM2; this interaction is associated with ubiquitination and degradation. Interacts with MCL1; may sequester BCL2L11 to prevent its pro-apoptotic activity. Interacts with GIMAP5. Interacts with BCL2L10/BCL-B. In terms of assembly, interacts (when phosphorylated) with USP27X; the interaction leads to BCL2L11 deubiquitination and stabilization. Interacts with humanin; the interaction prevents BIM-induced apoptosis. Does not interact with humanin. As to quaternary structure, interacts with BAX; the interaction may lead to BAX activation through conformational change. Does not interact with humanin. In terms of assembly, interacts with BAX; the interaction may lead to BAX activation through conformational change. Phosphorylation at Ser-69 by MAPK1/MAPK3 leads to interaction with TRIM2 and polyubiquitination, followed by proteasomal degradation. Deubiquitination catalyzed by USP27X stabilizes the protein. Post-translationally, ubiquitination by TRIM2 following phosphorylation by MAPK1/MAPK3 leads to proteasomal degradation. Conversely, deubiquitination catalyzed by USP27X stabilizes the protein. In terms of tissue distribution, isoform BimEL, isoform BimL and isoform BimS are the predominant isoforms and are widely expressed with tissue-specific variation. Isoform Bim-gamma is most abundantly expressed in small intestine and colon, and in lower levels in spleen, prostate, testis, heart, liver and kidney.

It is found in the endomembrane system. The protein localises to the mitochondrion. In terms of biological role, induces apoptosis and anoikis. Isoform BimL is more potent than isoform BimEL. Isoform Bim-alpha1, isoform Bim-alpha2 and isoform Bim-alpha3 induce apoptosis, although less potent than isoform BimEL, isoform BimL and isoform BimS. Isoform Bim-gamma induces apoptosis. Isoform Bim-alpha3 induces apoptosis possibly through a caspase-mediated pathway. Isoform BimAC and isoform BimABC lack the ability to induce apoptosis. This is Bcl-2-like protein 11 (BCL2L11) from Homo sapiens (Human).